A 1025-amino-acid chain; its full sequence is Complement receptor type 2 (1025 aa).

Positions 1 to 11 (MLTWFLFYFSE) are cleaved as a signal peptide. Residues 12–75 (ISCDPPPEVK…WDKAPPICES (64 aa)) form the Sushi 1 domain. Topologically, residues 12–963 (ISCDPPPEVK…PLALCKYRRW (952 aa)) are extracellular. 2 disulfide bridges follow: Cys14–Cys56 and Cys42–Cys73. Residues Asn77 and Asn113 are each glycosylated (N-linked (GlcNAc...) asparagine). 14 consecutive Sushi domains span residues 80-140 (ISCS…VCES), 144-204 (LECP…TCKE), 205-265 (AQCE…VCKE), 266-336 (ILCP…YCVL), 341-400 (VLCL…VCEK), 401-460 (GCQA…QCTV), 461-516 (AECK…LCKE), 517-587 (ITCP…LCKL), 592-651 (VQCT…LCKK), 652-706 (EGCE…VCTV), 707-771 (ILCQ…QCLQ), 776-835 (THCP…TCIR), 839-899 (LGCQ…FCKE), and 900-960 (VNCS…LCKY). Cystine bridges form between Cys82-Cys124, Cys110-Cys138, Cys146-Cys189, Cys175-Cys202, Cys207-Cys248, Cys234-Cys263, Cys268-Cys317, Cys297-Cys334, Cys343-Cys385, Cys371-Cys398, Cys402-Cys445, Cys431-Cys458, Cys463-Cys501, Cys487-Cys514, Cys519-Cys568, Cys548-Cys585, Cys594-Cys636, Cys622-Cys649, Cys654-Cys689, Cys675-Cys704, Cys709-Cys752, Cys738-Cys769, Cys778-Cys820, Cys806-Cys833, Cys841-Cys884, and Cys870-Cys897. Residues Asn276, Asn316, Asn364, and Asn380 are each glycosylated (N-linked (GlcNAc...) asparagine). N-linked (GlcNAc...) asparagine glycosylation is present at Asn484. Asn527 is a glycosylation site (N-linked (GlcNAc...) asparagine). Asn615 and Asn639 each carry an N-linked (GlcNAc...) asparagine glycan. N-linked (GlcNAc...) asparagine glycosylation occurs at Asn694. N-linked (GlcNAc...) asparagine glycosylation is found at Asn754, Asn790, Asn813, Asn823, and Asn851. A glycan (N-linked (GlcNAc...) asparagine) is linked at Asn901. 2 disulfides stabilise this stretch: Cys902–Cys945 and Cys931–Cys958. A helical transmembrane segment spans residues 964–990 (STIPLICGISVGSALIILMSVGFCMIL). Residues 991 to 1025 (KHRESNYYTKTRPKEGALHLETREVYSIDPYNPAS) are Cytoplasmic-facing.

Belongs to the receptors of complement activation (RCA) family. As to quaternary structure, interacts (via Sushi domain 1 and 2) with C3. Interacts with CD19. Part of a complex composed of CD19, CR2/CD21, CD81 and IFITM1/CD225 in the membrane of mature B-cells. Interacts (via Sushi domain 1 and 2) with FCER2 (via the C-terminus). Interacts with CD23. Interacts with FCRL5. Interacts with CR1. Interacts with INFNA1. As to expression, B-lymphocytes.

It localises to the cell membrane. In terms of biological role, serves as a receptor for various ligands including complement component CD3d, HNRNPU OR IFNA1. When C3d is bound to antigens, attaches to C3d on B-cell surface and thereby facilitates the recognition and uptake of antigens by B-cells. This interaction enhances B-cell activation and subsequent immune responses. Forms a complex with several partners on the surface of B-cells including CD19, FCRL5 and CD81, to form the B-cell coreceptor complex that plays a crucial role in B-cell activation and signaling. Also induces specific intracellular signaling separately from the BCR and CD19 by activating the tyrosine kinase SRC, which then phosphorylates nucleolin/NCL and triggers AKT and GSK3 kinase activities in a SYK/CD19-independent manner. Acts as a ligand for CD23 (FcepsilonRII), a low-affinity receptor for IgE, which is expressed on B-cells and other immune cells, and thus participates in the regulation of IgE production. The sequence is that of Complement receptor type 2 (Cr2) from Mus musculus (Mouse).